The sequence spans 335 residues: Glycerol-3-phosphate dehydrogenase [NAD(P)+] (335 aa).

The NADPH site is built by serine 10, phenylalanine 11, arginine 31, and lysine 105. Sn-glycerol 3-phosphate contacts are provided by lysine 105, glycine 136, and serine 138. Residue alanine 140 participates in NADPH binding. Residues lysine 191, aspartate 244, serine 254, arginine 255, and asparagine 256 each coordinate sn-glycerol 3-phosphate. Residue lysine 191 is the Proton acceptor of the active site. Arginine 255 serves as a coordination point for NADPH. Positions 279 and 281 each coordinate NADPH.

It belongs to the NAD-dependent glycerol-3-phosphate dehydrogenase family.

The protein localises to the cytoplasm. The catalysed reaction is sn-glycerol 3-phosphate + NAD(+) = dihydroxyacetone phosphate + NADH + H(+). It carries out the reaction sn-glycerol 3-phosphate + NADP(+) = dihydroxyacetone phosphate + NADPH + H(+). Its pathway is membrane lipid metabolism; glycerophospholipid metabolism. In terms of biological role, catalyzes the reduction of the glycolytic intermediate dihydroxyacetone phosphate (DHAP) to sn-glycerol 3-phosphate (G3P), the key precursor for phospholipid synthesis. The protein is Glycerol-3-phosphate dehydrogenase [NAD(P)+] of Myxococcus xanthus (strain DK1622).